Reading from the N-terminus, the 203-residue chain is MARFRGSITKVSRRLGVALSPKAEKYLERRPFAPGQHGQGRRGKISEYALQLREKQKMKYLYGILEKQFRNYYKKAVSQRGVTGDNLVKLIERRLDNVVFRAGFAPSRAGARQLVSHSHLLVNGRKVNIPSFLVSPGDLIEFRQKSRNMDAVTDALNRAPDARIPAWIQVDKANQKAVFLSVPERVDIQEPYNEQLVVELYSK.

In terms of domain architecture, S4 RNA-binding spans 93 to 154; the sequence is RRLDNVVFRA…KSRNMDAVTD (62 aa).

It belongs to the universal ribosomal protein uS4 family. In terms of assembly, part of the 30S ribosomal subunit. Contacts protein S5. The interaction surface between S4 and S5 is involved in control of translational fidelity.

Its function is as follows. One of the primary rRNA binding proteins, it binds directly to 16S rRNA where it nucleates assembly of the body of the 30S subunit. Functionally, with S5 and S12 plays an important role in translational accuracy. This chain is Small ribosomal subunit protein uS4, found in Chlorobium luteolum (strain DSM 273 / BCRC 81028 / 2530) (Pelodictyon luteolum).